We begin with the raw amino-acid sequence, 458 residues long: Methylenetetrahydrofolate--tRNA-(uracil-5-)-methyltransferase TrmFO (458 aa).

FAD is bound at residue 11–16 (GGGMAG).

It belongs to the MnmG family. TrmFO subfamily. FAD is required as a cofactor.

It localises to the cytoplasm. It carries out the reaction uridine(54) in tRNA + (6R)-5,10-methylene-5,6,7,8-tetrahydrofolate + NADH + H(+) = 5-methyluridine(54) in tRNA + (6S)-5,6,7,8-tetrahydrofolate + NAD(+). The catalysed reaction is uridine(54) in tRNA + (6R)-5,10-methylene-5,6,7,8-tetrahydrofolate + NADPH + H(+) = 5-methyluridine(54) in tRNA + (6S)-5,6,7,8-tetrahydrofolate + NADP(+). Its function is as follows. Catalyzes the folate-dependent formation of 5-methyl-uridine at position 54 (M-5-U54) in all tRNAs. The polypeptide is Methylenetetrahydrofolate--tRNA-(uracil-5-)-methyltransferase TrmFO (Jannaschia sp. (strain CCS1)).